Reading from the N-terminus, the 649-residue chain is MSEEHIYPVTDNLAKNSLLTNEEYLTQYQASISDPSAFWGEKGKILDWIKPYTKVKNSSFDSGHVSIKWFEDGKLNVSANCIDRHLATKGDQVAILWEGDTADKDEKITYKQLHQRVCQFANVLKSQGVRKGDVVCLYMPMTPEAAVAMLACTRIGAVHSIVFGGFSPDAIAGRIVDSSAKIVITADEGRRGGRVVPLKANVDEALTKDGTDCVKSVIVFKNTGGEVNWVVGRDLDWESVCADESSECEPEAMNAEDPLFILYTSGSTGTPKGVLHTTGGYLVYAAMTFKYVFDYQEGDIYWCTADVGWITGHTYSVYGPLANGATSLIFEGVPNYPTPARMSEVVDKHKVSILYTAPTAIRALMAKGDQAIEGTHRSSLRILGSVGEPINPEAWEWYYNKIGDERCPIVDTWWQTETGGILISPLPGATDLKPGSATRPFFGVQPAIVDSEGVVLEGEAAGNLVMLDSWPGQMRTLYNNHDRFEQTYFSTFKGMYFTGDGARRDSDGYYWITGRVDDVLNVSGHRMGTAEIESALVSHPKIAEAAVVGVPHEIKGQGIYAYVTLNEGEYPSPELYAEVKQWVRKEIGAIATPDILHWAEGLPKTRSGKIMRRILRKIATGESDSLGDISTLADPSVVEQLIKENRETS.

Residues arginine 191 to arginine 194, threonine 311, and asparagine 335 contribute to the CoA site. Residues glycine 387–proline 389, aspartate 411–threonine 416, aspartate 500, and arginine 515 contribute to the ATP site. Position 523 (serine 523) interacts with CoA. Residue arginine 526 coordinates ATP. Mg(2+) is bound by residues valine 537, histidine 539, and isoleucine 542. Arginine 584 is a binding site for CoA. Lysine 609 carries the post-translational modification N6-acetyllysine.

This sequence belongs to the ATP-dependent AMP-binding enzyme family. It depends on Mg(2+) as a cofactor. Acetylated. Deacetylation by the SIR2-homolog deacetylase activates the enzyme.

The catalysed reaction is acetate + ATP + CoA = acetyl-CoA + AMP + diphosphate. Its function is as follows. Catalyzes the conversion of acetate into acetyl-CoA (AcCoA), an essential intermediate at the junction of anabolic and catabolic pathways. AcsA undergoes a two-step reaction. In the first half reaction, AcsA combines acetate with ATP to form acetyl-adenylate (AcAMP) intermediate. In the second half reaction, it can then transfer the acetyl group from AcAMP to the sulfhydryl group of CoA, forming the product AcCoA. This Psychromonas ingrahamii (strain DSM 17664 / CCUG 51855 / 37) protein is Acetyl-coenzyme A synthetase.